The chain runs to 5488 residues: Polyketide synthase PksN (5488 aa).

Positions 3–301 (RQLKSPLSEG…NMMAVRSKNI (299 aa)) are condensation. Residues 165-205 (QQPSTADYYDFVDWENRMLTGREGEEHLAYWKEQLSGSLPV) form a WD 1 repeat. The adenylation stretch occupies residues 493-903 (TYKEVDEKST…EFPGILDQAV (411 aa)). One copy of the WD 2 repeat lies at 965–1006 (RKELEKREIVFNRRKPNHLQLTEIEDQVLRIWEETLKVSGFG). Residues 983–1058 (LQLTEIEDQV…AISEYILEMK (76 aa)) form the Carrier 1 domain. O-(pantetheine 4'-phosphoryl)serine is present on serine 1018. Positions 1089 to 1515 (DDSVAIVGIS…GTNAHAIFEQ (427 aa)) constitute a Ketosynthase family 3 (KS3) 1 domain. Catalysis depends on for beta-ketoacyl synthase 1 activity residues cysteine 1261, histidine 1397, and histidine 1437. Residues 1700–1826 (HPLVHHNTSV…GKAELIQLKR (127 aa)) form an N-terminal hotdog fold 1 region. The PKS/mFAS DH 1 domain occupies 1700 to 1992 (HPLVHHNTSV…TRVMEADIQT (293 aa)). The active-site Proton acceptor; for dehydratase activity 1 is histidine 1729. Positions 1840 to 1992 (DQSKMDAASF…TRVMEADIQT (153 aa)) are C-terminal hotdog fold 1. Aspartate 1900 (proton donor; for dehydratase activity 1) is an active-site residue. The stretch at 2165 to 2204 (KQAKGDGSKPWKDNGVYLISGGAGGLGHIFAKEIAEQTKN) is one WD 3 repeat. The region spanning 2448-2525 (SLLDKVKAML…AFGKHLSEEY (78 aa)) is the Carrier 2 domain. Serine 2485 is modified (O-(pantetheine 4'-phosphoryl)serine). Positions 2576–3012 (PEPIAIVGIS…GVNAHVIIEE (437 aa)) constitute a Ketosynthase family 3 (KS3) 2 domain. Catalysis depends on for beta-ketoacyl synthase 2 activity residues cysteine 2747, histidine 2882, and histidine 2928. A coiled-coil region spans residues 3038–3109 (KNEARLKEHA…AAEKSGVEDV (72 aa)). Residues 3207-3332 (HPLMHQNTSN…GSAVLNPAEN (126 aa)) form an N-terminal hotdog fold 2 region. Positions 3207-3492 (HPLMHQNTSN…FRAAEGGSGS (286 aa)) constitute a PKS/mFAS DH 2 domain. Residue histidine 3236 is the Proton acceptor; for dehydratase activity 2 of the active site. The C-terminal hotdog fold 2 stretch occupies residues 3346 to 3492 (QESHFSVNEV…FRAAEGGSGS (147 aa)). The active-site Proton donor; for dehydratase activity 2 is aspartate 3408. Residues 3626-3655 (DSHENVESVIEKLKENKRHTEDQHIKYEKG) adopt a coiled-coil conformation. Residues 3666 to 3705 (QIDDREISMPWRDKGVYLITGGAGGLGFIFAKEIARQAEQ) form a WD 4 repeat. Residues 3952 to 4026 (DHIQEVLKQT…AFAGYLSEEY (75 aa)) form the Carrier 3 domain. O-(pantetheine 4'-phosphoryl)serine is present on serine 3986. Residues 4076–4511 (PEPIAIVGMS…GVNAHVVIEE (436 aa)) form the Ketosynthase family 3 (KS3) 3 domain. Residues cysteine 4245, histidine 4380, and histidine 4427 each act as for beta-ketoacyl synthase 3 activity in the active site. Residues 4706 to 4830 (HPLIHVNTSD…GSASIRGAGD (125 aa)) form an N-terminal hotdog fold 3 region. The 283-residue stretch at 4706–4988 (HPLIHVNTSD…SRLLEEGIQP (283 aa)) folds into the PKS/mFAS DH 3 domain. Residue histidine 4735 is the Proton acceptor; for dehydratase activity 3 of the active site. Residues 4844–4988 (SLSTLSHDQC…SRLLEEGIQP (145 aa)) are C-terminal hotdog fold 3. Aspartate 4906 acts as the Proton donor; for dehydratase activity 3 in catalysis. A WD 5 repeat occupies 5206–5244 (HNNQPVHTKYKHGGVYVVIGGAGGIGEAWSEYMIRTYQA). A coiled-coil region spans residues 5275–5303 (IQADAANREELERAYETMKQTHREINGII).

This sequence belongs to the ATP-dependent AMP-binding enzyme family. The cofactor is pantetheine 4'-phosphate.

It is found in the cytoplasm. The protein operates within antibiotic biosynthesis; bacillaene biosynthesis. Involved in some intermediate steps for the synthesis of the antibiotic polyketide bacillaene which is involved in secondary metabolism. This is Polyketide synthase PksN (pksN) from Bacillus subtilis (strain 168).